Here is a 443-residue protein sequence, read N- to C-terminus: ATP-dependent protease ATPase subunit HslU (443 aa).

Residues Ile-18 and 60–65 contribute to the ATP site; that span reads GVGKTE. The interval 139 to 158 is disordered; that stretch reads AKNNWGQNETPAEPSSARQS. ATP-binding residues include Asp-256, Glu-321, and Arg-393.

Belongs to the ClpX chaperone family. HslU subfamily. A double ring-shaped homohexamer of HslV is capped on each side by a ring-shaped HslU homohexamer. The assembly of the HslU/HslV complex is dependent on binding of ATP.

It is found in the cytoplasm. Its function is as follows. ATPase subunit of a proteasome-like degradation complex; this subunit has chaperone activity. The binding of ATP and its subsequent hydrolysis by HslU are essential for unfolding of protein substrates subsequently hydrolyzed by HslV. HslU recognizes the N-terminal part of its protein substrates and unfolds these before they are guided to HslV for hydrolysis. This Erwinia tasmaniensis (strain DSM 17950 / CFBP 7177 / CIP 109463 / NCPPB 4357 / Et1/99) protein is ATP-dependent protease ATPase subunit HslU.